The chain runs to 438 residues: Glycerol-3-phosphate acyltransferase 3 (438 aa).

A helical membrane pass occupies residues 14–34 (WLTLVGGLILLPSAFGLSLGI). Phosphoserine occurs at positions 68 and 77. A run of 2 helical transmembrane segments spans residues 137–157 (ISPR…CFLL) and 161–181 (VTLA…VGQL). The short motif at 229–234 (HTSPID) is the HXXXXD motif element.

The protein belongs to the 1-acyl-sn-glycerol-3-phosphate acyltransferase family. As to expression, most abundant in epididymal fat, followed by small intestine, brown adipose tissue, kidney, heart and colon.

Its subcellular location is the endoplasmic reticulum membrane. The enzyme catalyses sn-glycerol 3-phosphate + an acyl-CoA = a 1-acyl-sn-glycero-3-phosphate + CoA. It carries out the reaction a 1-acyl-sn-glycero-3-phosphate + an acyl-CoA = a 1,2-diacyl-sn-glycero-3-phosphate + CoA. It catalyses the reaction dodecanoyl-CoA + sn-glycerol 3-phosphate = 1-dodecanoyl-sn-glycerol 3-phosphate + CoA. The catalysed reaction is sn-glycerol 3-phosphate + hexadecanoyl-CoA = 1-hexadecanoyl-sn-glycero-3-phosphate + CoA. The enzyme catalyses sn-glycerol 3-phosphate + (9Z)-octadecenoyl-CoA = 1-(9Z-octadecenoyl)-sn-glycero-3-phosphate + CoA. It carries out the reaction (9Z,12Z)-octadecadienoyl-CoA + sn-glycerol 3-phosphate = 1-(9Z,12Z)-octadecadienoyl-sn-glycero-3-phosphate + CoA. It catalyses the reaction 1-tetradecanoyl-sn-glycerol 3-phosphate + (9Z)-octadecenoyl-CoA = 1-tetradecanoyl-2-(9Z)-octadecenoyl-sn-glycero-3-phosphate + CoA. The catalysed reaction is 1-hexadecanoyl-sn-glycero-3-phosphate + (9Z)-octadecenoyl-CoA = 1-hexadecanoyl-2-(9Z-octadecenoyl)-sn-glycero-3-phosphate + CoA. The enzyme catalyses 1-(9Z-octadecenoyl)-sn-glycero-3-phosphate + (9Z)-octadecenoyl-CoA = 1,2-di-(9Z-octadecenoyl)-sn-glycero-3-phosphate + CoA. It carries out the reaction 1-(6Z,9Z,12Z-octadecatrienoyl)-sn-glycero-3-phosphate + (9Z)-octadecenoyl-CoA = (6Z,9Z,12Z)-octadecatrienoyl-2-(9Z)-octadecenoyl-sn-glycero-3-phosphate + CoA. It catalyses the reaction 1-(9Z,12Z,15Z)-octadecatrienoyl-sn-glycero-3-phosphate + (9Z)-octadecenoyl-CoA = 1-(9Z,12Z,15Z)-octadecatrienoyl-2-(9Z)-octadecenoyl-sn-glycero-3-phosphate + CoA. The catalysed reaction is 1-(9Z-octadecenoyl)-sn-glycero-3-phosphate + tetradecanoyl-CoA = 1-(9Z)-octadecenoyl-2-tetradecanoyl-sn-glycero-3-phosphate + CoA. The enzyme catalyses 1-(9Z-octadecenoyl)-sn-glycero-3-phosphate + hexadecanoyl-CoA = 1-(9Z)-octadecenoyl-2-hexadecanoyl-sn-glycero-3-phosphate + CoA. It carries out the reaction 1-(9Z-octadecenoyl)-sn-glycero-3-phosphate + octadecanoyl-CoA = 1-(9Z-octadecenoyl)-2-octadecanoyl-sn-glycero-3-phosphate + CoA. It catalyses the reaction 1-(9Z-octadecenoyl)-sn-glycero-3-phosphate + (9Z,12Z)-octadecadienoyl-CoA = 1-(9Z)-octadecenoyl-2-(9Z,12Z)-octadecadienoyl-sn-glycero-3-phosphate + CoA. The catalysed reaction is 1-(5Z,8Z,11Z,14Z-eicosatetraenoyl)-sn-glycero-3-phosphate + (9Z)-octadecenoyl-CoA = 1-(5Z,8Z,11Z,14Z)-eicosatetraenoyl-2-(9Z)-octadecenoyl-sn-glycero-3-phosphate + CoA. The protein operates within glycerolipid metabolism; triacylglycerol biosynthesis. Its pathway is phospholipid metabolism; CDP-diacylglycerol biosynthesis; CDP-diacylglycerol from sn-glycerol 3-phosphate: step 1/3. In terms of biological role, converts glycerol-3-phosphate to 1-acyl-sn-glycerol-3-phosphate (lysophosphatidic acid or LPA) by incorporating an acyl moiety at the sn-1 position of the glycerol backbone. Also converts LPA into 1,2-diacyl-sn-glycerol-3-phosphate (phosphatidic acid or PA) by incorporating an acyl moiety at the sn-2 position of the glycerol backbone. Protects cells against lipotoxicity. This chain is Glycerol-3-phosphate acyltransferase 3, found in Mus musculus (Mouse).